Consider the following 92-residue polypeptide: UPF0473 protein Cbei_1107 (92 aa).

It belongs to the UPF0473 family.

This Clostridium beijerinckii (strain ATCC 51743 / NCIMB 8052) (Clostridium acetobutylicum) protein is UPF0473 protein Cbei_1107.